We begin with the raw amino-acid sequence, 296 residues long: tRNA (guanine-N(7)-)-methyltransferase (296 aa).

Residues 1 to 26 (MSKRTREESEMEAGPSTASPGVSVSP) are disordered. S-adenosyl-L-methionine contacts are provided by residues Gly-101, 124-125 (EI), 168-169 (NS), and Leu-188. Asp-191 is an active-site residue. 266-268 (TEE) is a binding site for S-adenosyl-L-methionine.

The protein belongs to the class I-like SAM-binding methyltransferase superfamily. TrmB family. As to quaternary structure, forms a complex with TRM82.

The protein localises to the nucleus. It carries out the reaction guanosine(46) in tRNA + S-adenosyl-L-methionine = N(7)-methylguanosine(46) in tRNA + S-adenosyl-L-homocysteine. It functions in the pathway tRNA modification; N(7)-methylguanine-tRNA biosynthesis. Catalyzes the formation of N(7)-methylguanine at position 46 (m7G46) in tRNA. The chain is tRNA (guanine-N(7)-)-methyltransferase from Cryptococcus neoformans var. neoformans serotype D (strain JEC21 / ATCC MYA-565) (Filobasidiella neoformans).